We begin with the raw amino-acid sequence, 786 residues long: Endonuclease MutS2 (786 aa).

Position 332-339 (332-339) interacts with ATP; that stretch reads GPNTGGKT. Residues 711 to 786 enclose the Smr domain; the sequence is IDLRGMDSME…GTGVTVVELK (76 aa).

The protein belongs to the DNA mismatch repair MutS family. MutS2 subfamily. As to quaternary structure, homodimer. Binds to stalled ribosomes, contacting rRNA.

In terms of biological role, endonuclease that is involved in the suppression of homologous recombination and thus may have a key role in the control of bacterial genetic diversity. Its function is as follows. Acts as a ribosome collision sensor, splitting the ribosome into its 2 subunits. Detects stalled/collided 70S ribosomes which it binds and splits by an ATP-hydrolysis driven conformational change. Acts upstream of the ribosome quality control system (RQC), a ribosome-associated complex that mediates the extraction of incompletely synthesized nascent chains from stalled ribosomes and their subsequent degradation. Probably generates substrates for RQC. In Clostridium tetani (strain Massachusetts / E88), this protein is Endonuclease MutS2.